Reading from the N-terminus, the 474-residue chain is GTPase Der (474 aa).

EngA-type G domains lie at 3 to 167 and 204 to 379; these read LTIA…GSER and IRIA…RVWN. GTP-binding positions include 9-16, 56-60, 119-122, 210-217, 257-261, and 322-325; these read GRPNVGKS, DTAGL, NKSE, GRPNTGKS, and NKWD. The 85-residue stretch at 380–464 folds into the KH-like domain; that stretch reads RRISTAKLNQ…PVRLSLRASD (85 aa).

This sequence belongs to the TRAFAC class TrmE-Era-EngA-EngB-Septin-like GTPase superfamily. EngA (Der) GTPase family. Associates with the 50S ribosomal subunit.

Functionally, GTPase that plays an essential role in the late steps of ribosome biogenesis. This Bartonella tribocorum (strain CIP 105476 / IBS 506) protein is GTPase Der.